We begin with the raw amino-acid sequence, 273 residues long: DnaJ homolog subfamily C member 27 (273 aa).

The required for interaction with MAPK1 stretch occupies residues 1-18 (MEASMPKRKEPGKSLRIK). GTP-binding positions include 23-30 (GNAEVGKS), 71-75 (DMAGD), and 134-137 (NKID). Residues 217–273 (DSWDMLGVKPGASRDEVNKAYRKLAVLLHPDKCVAPGSEDAFKAVVNARTALLKNIK) form the J domain.

Belongs to the small GTPase superfamily. Rab family. As to quaternary structure, interacts directly with MAPK1 (wild-type and kinase-deficient forms). Interacts directly (in GTP-bound form) with MAP2K1 (wild-type and kinase-deficient forms).

The protein resides in the nucleus. Its function is as follows. GTPase which can activate the MEK/ERK pathway and induce cell transformation when overexpressed. May act as a nuclear scaffold for MAPK1, probably by association with MAPK1 nuclear export signal leading to enhanced ERK1/ERK2 signaling. The chain is DnaJ homolog subfamily C member 27 (DNAJC27) from Bos taurus (Bovine).